The primary structure comprises 494 residues: Nuclear distribution protein PAC1 (494 aa).

One can recognise a LisH domain in the interval 14-46 (QKNELDKSVLRYLNWNYKQTVRHEHAQDYESVR). The stretch at 90 to 123 (NSIVRLQKKIIELEQNTETLVSQIKDLNTQVSEL) forms a coiled coil. WD repeat units follow at residues 153–192 (NVES…IPLA), 196–244 (SHTK…CKFQ), 251–292 (GHEH…SLKT), 295–334 (PHSQ…SVGT), 347–395 (HFIE…LMAH), 415–454 (GHLS…HVWE), and 457–492 (HTGF…SNVF).

The protein belongs to the WD repeat LIS1/nudF family. Self-associates. Interacts with NDL1 and dynein.

The protein resides in the cytoplasm. It localises to the cytoskeleton. It is found in the spindle pole. Functionally, positively regulates the activity of the minus-end directed microtubule motor protein dynein. Plays a central role in positioning the mitotic spindle at the bud neck during cell division. Targets cytoplasmic dynein to microtubule plus ends, thereby promoting dynein-mediated microtubule sliding along the bud cortex and consequently the movement of the mitotic spindle to the bud neck. The sequence is that of Nuclear distribution protein PAC1 from Saccharomyces cerevisiae (strain RM11-1a) (Baker's yeast).